The chain runs to 241 residues: MAGHSKWANIKHKKAAQDAKRGKIFTRLIKEITVAARLGGGDPNSNPRLRLAMDKAFGHNMPKDNVERAIKRGCGELEGVNYEEIRYEGYGISGAAVMVDCMTDNRTRTVAAVRHAFTKHGGNLGTDGSVAYLFKHCGQLLFAPGVGEAQLLEAALEAGAEDVISNDDGSLEVITGPDTFVSVRDTLEKAGFKAELAEVTWKPENEVLLQGDDAVKMQKLLDALEDIDDVQDVYTSAVLDT.

Belongs to the TACO1 family.

The protein localises to the cytoplasm. The chain is Probable transcriptional regulatory protein NE0210 from Nitrosomonas europaea (strain ATCC 19718 / CIP 103999 / KCTC 2705 / NBRC 14298).